The following is an 84-amino-acid chain: U8-theraphotoxin-Hhn1a (84 aa).

The first 21 residues, 1–21 (MKVVLLECLVWMMAMMELVSC), serve as a signal peptide directing secretion. Intrachain disulfides connect Cys23/Cys35, Cys29/Cys44, Cys34/Cys67, Cys54/Cys75, and Cys69/Cys81.

It belongs to the AVIT (prokineticin) family. As to expression, expressed by the venom gland.

The protein resides in the secreted. The protein is U8-theraphotoxin-Hhn1a of Cyriopagopus hainanus (Chinese bird spider).